We begin with the raw amino-acid sequence, 338 residues long: Dodecaprenyl-phosphate galacturonate synthase (338 aa).

2 helical membrane-spanning segments follow: residues 254 to 274 (FFGS…LYLG) and 289 to 309 (MLMV…TGIL).

This sequence belongs to the glycosyltransferase 2 family.

It is found in the cell membrane. The catalysed reaction is di-trans,nona-cis-dodecaprenyl phosphate + UDP-alpha-D-galacturonate = beta-D-galacturonosyl di-trans,nona-cis-dodecaprenyl phosphate + UDP. Glycosyltransferase that catalyzes the synthesis of dodecaprenyl-phosphate galacturonate (Dod-P-GalA), likely from UDP-GalA and dodecaprenyl-phosphate. Dod-P-GalA is the lipid donor required for GalA transfer to lipopolysaccharide (LPS) specific residues catalyzed by the GalA transferases RgtA, RgtB, RgtC and RgtD. The chain is Dodecaprenyl-phosphate galacturonate synthase from Rhizobium johnstonii (strain DSM 114642 / LMG 32736 / 3841) (Rhizobium leguminosarum bv. viciae).